The primary structure comprises 877 residues: Probable alpha/beta-glucosidase agdC (877 aa).

The N-terminal stretch at 1-14 (MLGSLLLLAPLAGA) is a signal peptide. 3 N-linked (GlcNAc...) asparagine glycosylation sites follow: Asn171, Asn293, and Asn373. Asp422 functions as the Nucleophile in the catalytic mechanism. Residue Glu425 is part of the active site. The tract at residues 432 to 476 (DPCTDPERYSSENNLPPAPPPVRSSSPRPLPGFPADFQPSSASRS) is disordered. Over residues 447–463 (PPAPPPVRSSSPRPLPG) the composition is skewed to pro residues. A glycan (N-linked (GlcNAc...) asparagine) is linked at Asn508. Asp573 serves as the catalytic Proton donor. Asn574, Asn610, and Asn744 each carry an N-linked (GlcNAc...) asparagine glycan.

The protein belongs to the glycosyl hydrolase 31 family.

It localises to the secreted. It carries out the reaction Hydrolysis of terminal, non-reducing (1-&gt;4)-linked alpha-D-glucose residues with release of alpha-D-glucose.. It catalyses the reaction Hydrolysis of terminal, non-reducing beta-D-glucosyl residues with release of beta-D-glucose.. Functionally, glucosidase involved in the degradation of cellulosic biomass. Has both alpha- and beta-glucosidase activity. This is Probable alpha/beta-glucosidase agdC (agdC) from Aspergillus oryzae (strain ATCC 42149 / RIB 40) (Yellow koji mold).